We begin with the raw amino-acid sequence, 175 residues long: Translation initiation factor IF-3, chloroplastic (175 aa).

Belongs to the IF-3 family. In terms of assembly, monomer.

The protein resides in the plastid. It localises to the chloroplast. IF-3 binds to the 30S ribosomal subunit and shifts the equilibrium between 70S ribosomes and their 50S and 30S subunits in favor of the free subunits, thus enhancing the availability of 30S subunits on which protein synthesis initiation begins. The protein is Translation initiation factor IF-3, chloroplastic of Cyanidioschyzon merolae (strain NIES-3377 / 10D) (Unicellular red alga).